A 202-amino-acid chain; its full sequence is Probable chemoreceptor glutamine deamidase CheD (202 aa).

It belongs to the CheD family.

It carries out the reaction L-glutaminyl-[protein] + H2O = L-glutamyl-[protein] + NH4(+). Its function is as follows. Probably deamidates glutamine residues to glutamate on methyl-accepting chemotaxis receptors (MCPs), playing an important role in chemotaxis. This chain is Probable chemoreceptor glutamine deamidase CheD, found in Thiobacillus denitrificans (strain ATCC 25259 / T1).